The sequence spans 507 residues: Arabinose import ATP-binding protein AraG (507 aa).

ABC transporter domains follow at residues Leu14–Arg249 and Arg249–Thr505. Gly46–Ser53 lines the ATP pocket.

The protein belongs to the ABC transporter superfamily. Arabinose importer (TC 3.A.1.2.2) family. In terms of assembly, the complex is composed of two ATP-binding proteins (AraG), two transmembrane proteins (AraH) and a solute-binding protein (AraF).

The protein localises to the cell inner membrane. It catalyses the reaction L-arabinose(out) + ATP + H2O = L-arabinose(in) + ADP + phosphate + H(+). Part of the ABC transporter complex AraFGH involved in arabinose import. Responsible for energy coupling to the transport system. This is Arabinose import ATP-binding protein AraG from Pseudomonas savastanoi pv. phaseolicola (strain 1448A / Race 6) (Pseudomonas syringae pv. phaseolicola (strain 1448A / Race 6)).